A 327-amino-acid chain; its full sequence is Pyruvate dehydrogenase E1 component subunit beta (327 aa).

Glu63 contributes to the thiamine diphosphate binding site.

Heterodimer of an alpha and a beta chain. Thiamine diphosphate serves as cofactor.

It catalyses the reaction N(6)-[(R)-lipoyl]-L-lysyl-[protein] + pyruvate + H(+) = N(6)-[(R)-S(8)-acetyldihydrolipoyl]-L-lysyl-[protein] + CO2. Functionally, the pyruvate dehydrogenase complex catalyzes the overall conversion of pyruvate to acetyl-CoA and CO(2). It contains multiple copies of three enzymatic components: pyruvate dehydrogenase (E1), dihydrolipoamide acetyltransferase (E2) and lipoamide dehydrogenase (E3). The sequence is that of Pyruvate dehydrogenase E1 component subunit beta (pdhB) from Mycoplasma pneumoniae (strain ATCC 29342 / M129 / Subtype 1) (Mycoplasmoides pneumoniae).